A 376-amino-acid polypeptide reads, in one-letter code: Cytochrome b (376 aa).

The next 4 helical transmembrane spans lie at 28-48 (YGFL…FLAS), 72-94 (WCFR…LHIL), 107-127 (SWIS…IGYV), and 169-189 (FFVL…IHIF). Histidine 78 and histidine 92 together coordinate heme b. Histidine 173 and histidine 187 together coordinate heme b. Histidine 192 serves as a coordination point for a ubiquinone. 4 helical membrane-spanning segments follow: residues 214–234 (LLSL…IQSI), 274–294 (IPSK…LFLL), 317–337 (VPII…CQLP), and 340–360 (IFIL…LFAL).

The protein belongs to the cytochrome b family. In terms of assembly, the main subunits of complex b-c1 are: cytochrome b, cytochrome c1 and the Rieske protein. Heme b serves as cofactor.

It localises to the mitochondrion inner membrane. Functionally, component of the ubiquinol-cytochrome c reductase complex (complex III or cytochrome b-c1 complex) that is part of the mitochondrial respiratory chain. The b-c1 complex mediates electron transfer from ubiquinol to cytochrome c. Contributes to the generation of a proton gradient across the mitochondrial membrane that is then used for ATP synthesis. The polypeptide is Cytochrome b (MT-CYB) (Plasmodium chabaudi).